The sequence spans 488 residues: MRREVVFVTSEMYPFSKSGGLGDVLGAQPLALHRMGVPTSVITPFYGRLRTADYGIHLTVSDCHVGYPWDPITCDIYEADYHGMKVYFVHRGEYFDRRYYYNDHKGDYFDNCERFIFFCRAAMALLRRLGTPPAVLHANDWQSGLVPAYLHFWRQTDPFWADTRSVMTIHNLAFQGRFASRLFTGCGLPPQAWTMSGVEFWGDFNLLKAGIAYADMVTTVSPSYAREILGPAYGCGLEGILQVRQHALHGILNGADYGIWNPAQDKFLPCRYGPDDPQGFAGKQRCKAALLDELGLAPELAHRPVLGFIGRLRGQKGIDLLLDIVPRLMERNVGVIILGEGNLAHEARALDLMETYRGRLCAIVGYTEDLAHRIQAGSDIFLMPSRYEPCGLTQMYALRYGTPPVATAVGGLRDTIVPWPSPEATGFTFGRSDPQLFLEAILDAVHYWEHDTEGWRAMMTRAMHQDFSWERAGRSYLNLYRQLGFDFS.

ADP-alpha-D-glucose is bound at residue Lys17.

Belongs to the glycosyltransferase 1 family. Bacterial/plant glycogen synthase subfamily.

The enzyme catalyses [(1-&gt;4)-alpha-D-glucosyl](n) + ADP-alpha-D-glucose = [(1-&gt;4)-alpha-D-glucosyl](n+1) + ADP + H(+). It functions in the pathway glycan biosynthesis; glycogen biosynthesis. In terms of biological role, synthesizes alpha-1,4-glucan chains using ADP-glucose. The protein is Glycogen synthase of Nitratidesulfovibrio vulgaris (strain DSM 19637 / Miyazaki F) (Desulfovibrio vulgaris).